A 238-amino-acid polypeptide reads, in one-letter code: 7-carboxy-7-deazaguanine synthase (238 aa).

Residues 14–16 (IQG) and arginine 29 each bind substrate. Residues 20-234 (VVGQKTMFIR…PQLHALVWGN (215 aa)) form the Radical SAM core domain. Residues cysteine 33, cysteine 37, and cysteine 40 each coordinate [4Fe-4S] cluster. Serine 42 provides a ligand contact to Mg(2+). Residue serine 80 participates in substrate binding. S-adenosyl-L-methionine is bound by residues glycine 82 and 126 to 128 (SPK).

It belongs to the radical SAM superfamily. 7-carboxy-7-deazaguanine synthase family. As to quaternary structure, homodimer. [4Fe-4S] cluster serves as cofactor. Requires S-adenosyl-L-methionine as cofactor. The cofactor is Mg(2+).

It catalyses the reaction 6-carboxy-5,6,7,8-tetrahydropterin + H(+) = 7-carboxy-7-deazaguanine + NH4(+). Its pathway is purine metabolism; 7-cyano-7-deazaguanine biosynthesis. In terms of biological role, catalyzes the complex heterocyclic radical-mediated conversion of 6-carboxy-5,6,7,8-tetrahydropterin (CPH4) to 7-carboxy-7-deazaguanine (CDG), a step common to the biosynthetic pathways of all 7-deazapurine-containing compounds. This chain is 7-carboxy-7-deazaguanine synthase, found in Bacillus cereus (strain ATCC 14579 / DSM 31 / CCUG 7414 / JCM 2152 / NBRC 15305 / NCIMB 9373 / NCTC 2599 / NRRL B-3711).